A 310-amino-acid polypeptide reads, in one-letter code: Glutamyl-Q tRNA(Asp) synthetase (310 aa).

Residues 24–28 and glutamate 60 contribute to the L-glutamate site; that span reads RFAPS. The short motif at 27–37 is the 'HIGH' region element; that stretch reads PSPSGPLHFGS. Residues cysteine 116, cysteine 118, tyrosine 130, and cysteine 134 each coordinate Zn(2+). L-glutamate-binding residues include tyrosine 187 and arginine 205. The 'KMSKS' region signature appears at 243–247; the sequence is KLSKQ. ATP is bound at residue lysine 246.

The protein belongs to the class-I aminoacyl-tRNA synthetase family. GluQ subfamily. Zn(2+) is required as a cofactor.

Its function is as follows. Catalyzes the tRNA-independent activation of glutamate in presence of ATP and the subsequent transfer of glutamate onto a tRNA(Asp). Glutamate is transferred on the 2-amino-5-(4,5-dihydroxy-2-cyclopenten-1-yl) moiety of the queuosine in the wobble position of the QUC anticodon. The protein is Glutamyl-Q tRNA(Asp) synthetase of Photobacterium profundum (strain SS9).